The primary structure comprises 463 residues: L-seryl-tRNA(Sec) selenium transferase (463 aa).

N6-(pyridoxal phosphate)lysine is present on K295.

It belongs to the SelA family. Homodecamer; pentamer of dimers. Binds only one seryl-tRNA(Sec) per dimer. Requires pyridoxal 5'-phosphate as cofactor.

It is found in the cytoplasm. The catalysed reaction is L-seryl-tRNA(Sec) + selenophosphate + H(+) = L-selenocysteinyl-tRNA(Sec) + phosphate. It participates in aminoacyl-tRNA biosynthesis; selenocysteinyl-tRNA(Sec) biosynthesis; selenocysteinyl-tRNA(Sec) from L-seryl-tRNA(Sec) (bacterial route): step 1/1. Functionally, converts seryl-tRNA(Sec) to selenocysteinyl-tRNA(Sec) required for selenoprotein biosynthesis. This Escherichia coli O127:H6 (strain E2348/69 / EPEC) protein is L-seryl-tRNA(Sec) selenium transferase.